A 500-amino-acid chain; its full sequence is NAD(P)H-quinone oxidoreductase chain 4, chloroplastic (500 aa).

14 helical membrane passes run 3–23 (FFPWLTIIVVLPIFAGSVIFF), 37–57 (ICICILELLLTTYAFCYHFQF), 84–104 (GLSIGPILLTGFITTLATLAA), 111–129 (SRLFHFLMLAMYSGQIGSF), 134–154 (LLLFFIMWEFELIPVYLLLSI), 167–187 (FILYTAGGSIFLLMGVLGVGL), 208–228 (ALEIIFYIGFFIAFAVKSPII), 242–262 (HYSTCMLLAGILLKMGAYGLI), 272–292 (AHSIFSPWLVIVGTIQIIYAA), 305–325 (IAYSSVSHMGFILIGIGSITD), 330–350 (GAILQIISHGFIGAALFFLAG), 386–406 (LALPGMSGFVAELIVFFGIIT), 416–436 (ILITFVMAIGMILTPIYSLSM), and 462–482 (LFVSISIFLPVIGIGMYPDFV).

Belongs to the complex I subunit 4 family.

It localises to the plastid. The protein resides in the chloroplast thylakoid membrane. It carries out the reaction a plastoquinone + NADH + (n+1) H(+)(in) = a plastoquinol + NAD(+) + n H(+)(out). The catalysed reaction is a plastoquinone + NADPH + (n+1) H(+)(in) = a plastoquinol + NADP(+) + n H(+)(out). This chain is NAD(P)H-quinone oxidoreductase chain 4, chloroplastic, found in Panax ginseng (Korean ginseng).